We begin with the raw amino-acid sequence, 236 residues long: 2,3,4,5-tetrahydropyridine-2,6-dicarboxylate N-acetyltransferase (236 aa).

This sequence belongs to the transferase hexapeptide repeat family. DapH subfamily.

The enzyme catalyses (S)-2,3,4,5-tetrahydrodipicolinate + acetyl-CoA + H2O = L-2-acetamido-6-oxoheptanedioate + CoA. It participates in amino-acid biosynthesis; L-lysine biosynthesis via DAP pathway; LL-2,6-diaminopimelate from (S)-tetrahydrodipicolinate (acetylase route): step 1/3. In terms of biological role, catalyzes the transfer of an acetyl group from acetyl-CoA to tetrahydrodipicolinate. This is 2,3,4,5-tetrahydropyridine-2,6-dicarboxylate N-acetyltransferase from Bacillus velezensis (strain DSM 23117 / BGSC 10A6 / LMG 26770 / FZB42) (Bacillus amyloliquefaciens subsp. plantarum).